We begin with the raw amino-acid sequence, 256 residues long: MATSLARISKRSITSAVSSNLIRRYFAAEAVAVATTETPKPKSQVTPSPDRVKWDYRGQRQIIPLGQWLPKVAVDAYVAPNVVLAGQVTVWDGSSVWNGAVLRGDLNKITVGFCSNVQERCVVHAAWSSPTGLPAQTLIDRYVTVGAYSLLRSCTIEPECIIGQHSILMEGSLVETRSILEAGSVLPPGRRIPSGELWGGNPARFIRTLTNEETLEIPKLAVAINHLSGDYFSEFLPYSTIYLEVEKFKKSLGIAI.

The transit peptide at 1-33 (MATSLARISKRSITSAVSSNLIRRYFAAEAVAV) directs the protein to the mitochondrion. Substrate is bound by residues 103-105 (RGD) and 118-119 (QE). H124 contributes to the Zn(2+) binding site. Positions 152, 164, and 231 each coordinate substrate.

Belongs to the gamma-class carbonic anhydrase family. As to quaternary structure, component of the mitochondrial oxidoreductase respiratory chain complex I; element of the extra matrix-exposed domain, which is attached to the membrane arm of this complex. Interacts with GAMMACA2.

The protein resides in the mitochondrion membrane. Its function is as follows. Involved in complex I assembly in mitochondria and respiration. This is Gamma carbonic anhydrase-like 2, mitochondrial (GAMMACAL2) from Arabidopsis thaliana (Mouse-ear cress).